A 254-amino-acid chain; its full sequence is Imidazole glycerol phosphate synthase subunit HisF (254 aa).

Active-site residues include Asp12 and Asp131.

Belongs to the HisA/HisF family. As to quaternary structure, heterodimer of HisH and HisF.

It is found in the cytoplasm. It catalyses the reaction 5-[(5-phospho-1-deoxy-D-ribulos-1-ylimino)methylamino]-1-(5-phospho-beta-D-ribosyl)imidazole-4-carboxamide + L-glutamine = D-erythro-1-(imidazol-4-yl)glycerol 3-phosphate + 5-amino-1-(5-phospho-beta-D-ribosyl)imidazole-4-carboxamide + L-glutamate + H(+). The protein operates within amino-acid biosynthesis; L-histidine biosynthesis; L-histidine from 5-phospho-alpha-D-ribose 1-diphosphate: step 5/9. Its function is as follows. IGPS catalyzes the conversion of PRFAR and glutamine to IGP, AICAR and glutamate. The HisF subunit catalyzes the cyclization activity that produces IGP and AICAR from PRFAR using the ammonia provided by the HisH subunit. The chain is Imidazole glycerol phosphate synthase subunit HisF from Leifsonia xyli subsp. xyli (strain CTCB07).